Reading from the N-terminus, the 433-residue chain is Glutamyl-tRNA reductase (433 aa).

Substrate is bound by residues 49 to 52, S114, 119 to 121, and Q125; these read TCNR and EPQ. The active-site Nucleophile is C50. 201-206 contributes to the NADP(+) binding site; that stretch reads GAGETI.

The protein belongs to the glutamyl-tRNA reductase family. Homodimer.

The catalysed reaction is (S)-4-amino-5-oxopentanoate + tRNA(Glu) + NADP(+) = L-glutamyl-tRNA(Glu) + NADPH + H(+). The protein operates within porphyrin-containing compound metabolism; protoporphyrin-IX biosynthesis; 5-aminolevulinate from L-glutamyl-tRNA(Glu): step 1/2. In terms of biological role, catalyzes the NADPH-dependent reduction of glutamyl-tRNA(Glu) to glutamate 1-semialdehyde (GSA). The protein is Glutamyl-tRNA reductase of Histophilus somni (strain 2336) (Haemophilus somnus).